A 401-amino-acid chain; its full sequence is Chromatin modification-related protein EAF3 (401 aa).

The Tudor-knot domain occupies 13 to 98 (RCLAFHGPLM…DEWVGYDRIR (86 aa)). A compositionally biased stretch (polar residues) spans 39 to 53 (TSIPNDKPGGSSQAT). Disordered regions lie at residues 39 to 65 (TSIPNDKPGGSSQATKEIKPQKLGEDE) and 117 to 210 (EAKK…NMLH). Composition is skewed to basic and acidic residues over residues 54–63 (KEIKPQKLGE) and 117–126 (EAKKSLLEQQ). The segment covering 153–190 (SISKSTSQSFLTSSVSGRKSGRSSANSLHPGSSLRSSS) has biased composition (low complexity). S201 carries the post-translational modification Phosphoserine. Positions 216–399 (PTPKISLQIP…TSSQYEGVAL (184 aa)) constitute an MRG domain.

It belongs to the MRG family. Component of the NuA4 histone acetyltransferase complex composed of at least ACT1, ARP4, YAF9, VID21, SWC4, EAF3, EAF5, EAF6, EAF7, EPL1, ESA1, TRA1 and YNG2.

It is found in the nucleus. In terms of biological role, component of the NuA4 histone acetyltransferase complex which is involved in transcriptional activation of selected genes principally by acetylation of nucleosomal histone H4 and H2A. The NuA4 complex is also involved in DNA repair. This chain is Chromatin modification-related protein EAF3 (EAF3), found in Saccharomyces cerevisiae (strain ATCC 204508 / S288c) (Baker's yeast).